We begin with the raw amino-acid sequence, 635 residues long: MSDPNVTATIMNAQGECSSGSLESRPGILGWLDANFEKPFLVAGMLAIIFIITFQTLYRYIGVYLHEGAAAAVWTEEMARFIFIWISYLAVPVAIKNRSSIRVDIIFDRLPVRFQNISWIIVDVCFLTLAATVLWQSLDLIKMQLTYPQTSPALQLPYYIPYLVLPVSFGLMAVRLLQDLAGQVRICGAADTVIGLILCAVLAAPLFIADYIDPLPVLFGYFALFLVVGVPIAIGLGLAALATIVAAGSLPIDYVAQIAFTSIDSFPIMAIPFFIAAGVFMGAGGLSRRLLNLADEMLGALPGGMALATIGTCMFFAAISGSGPATVAAIGSLTIPAMVERGYCKYFSAAIVAAAGAIGVMIPPSNPFVVYGVSAQASIGKLFMGGIVPGLLTGLALMAYSYWYSKKRGWKGEVRDRNLKTFMHAVWEAKWALMVPVIVLGGIYGGIMTPTEAAALAAFYGLIIGCFVHRELSCGSFYDCVVEAAGTSAMVIVLMSMATIFGNIMTIEEVPTTIAQAMLGLTTDKIAILLMINVLLLIIGTFMEALAAIVILTPILLPIVLKVGVDPVHFGIIMVVNLAIGFVTPPVGVNLFVASGVANAKIEQLSKVVLPLIALMLAVLLITTYVPAIPMFFAG.

A run of 16 helical transmembrane segments spans residues Lys38–Tyr58, Thr75–Ile95, Ile117–Ser137, Leu154–Val174, Thr192–Ile212, Val217–Gly237, Phe266–Leu286, Gly299–Ile319, Ala350–Val370, Ile379–Ala399, Trp431–Thr451, Ala453–Ser473, Val481–Phe501, Ile526–Leu546, Ile572–Phe592, and Val609–Ile629.

This sequence in the N-terminal section; belongs to the TRAP transporter small permease family. It in the C-terminal section; belongs to the TRAP transporter large permease family. In terms of assembly, the complex comprises the periplasmic solute receptor protein DctP, and the fused transmembrane protein DctMQ.

It localises to the cell inner membrane. The protein operates within organosulfur degradation; alkanesulfonate degradation. Functionally, part of the tripartite ATP-independent periplasmic (TRAP) transport system DctPQM involved in the uptake of isethionate (2-hydroxyethanesulfonate), which is then catabolized by enzymes encoded by adjacent genes in the locus. Thereby is involved in an anaerobic respiration pathway that converts the sulfonate isethionate to ammonia, acetate and sulfide. The chain is Isethionate TRAP transporter permease protein DctMQ from Oleidesulfovibrio alaskensis (strain ATCC BAA-1058 / DSM 17464 / G20) (Desulfovibrio alaskensis).